A 227-amino-acid chain; its full sequence is Octanoyltransferase (227 aa).

In terms of domain architecture, BPL/LPL catalytic spans 34–212; sequence RQREDGLMLL…AFAEVFPVTW (179 aa). Substrate contacts are provided by residues 76 to 83, 143 to 145, and 156 to 158; these read RGGEVTYH, AIA, and GFA. Cys174 (acyl-thioester intermediate) is an active-site residue.

This sequence belongs to the LipB family.

Its subcellular location is the cytoplasm. It catalyses the reaction octanoyl-[ACP] + L-lysyl-[protein] = N(6)-octanoyl-L-lysyl-[protein] + holo-[ACP] + H(+). Its pathway is protein modification; protein lipoylation via endogenous pathway; protein N(6)-(lipoyl)lysine from octanoyl-[acyl-carrier-protein]: step 1/2. Functionally, catalyzes the transfer of endogenously produced octanoic acid from octanoyl-acyl-carrier-protein onto the lipoyl domains of lipoate-dependent enzymes. Lipoyl-ACP can also act as a substrate although octanoyl-ACP is likely to be the physiological substrate. The protein is Octanoyltransferase of Synechocystis sp. (strain ATCC 27184 / PCC 6803 / Kazusa).